The sequence spans 308 residues: MPYTKKDLISMKDLSKDDIFDILRLALKFKELNKSPVKKADSLRGKTVINAFFENSTRTRTSFEIAAKRLGADAINFSSSVSSTKKGESLIDTIKNMEAMKTDIFVVRHASSGTAKFIADNASASVVNAGDGLNEHPTQCLLDLLTIYENKGRLENLNVAIIGDIFRSRVARSNVWAMKTLGINVKLFGPPMMTRDCEAFGVPLCSNIDEAVENSDVIIMLRIQLERQDGEPEFPSVREYSKFFGLTAKRMELAKKDVIIMHPGPINRGVEINSDVADDPKFTKILNQVENGVAVRMAVLDTLIKNRS.

Carbamoyl phosphate-binding residues include R58 and T59. Residue K86 coordinates L-aspartate. 3 residues coordinate carbamoyl phosphate: R108, H136, and Q139. R169 and R222 together coordinate L-aspartate. Carbamoyl phosphate contacts are provided by G264 and P265.

It belongs to the aspartate/ornithine carbamoyltransferase superfamily. ATCase family. Heterododecamer (2C3:3R2) of six catalytic PyrB chains organized as two trimers (C3), and six regulatory PyrI chains organized as three dimers (R2).

It catalyses the reaction carbamoyl phosphate + L-aspartate = N-carbamoyl-L-aspartate + phosphate + H(+). It functions in the pathway pyrimidine metabolism; UMP biosynthesis via de novo pathway; (S)-dihydroorotate from bicarbonate: step 2/3. Its function is as follows. Catalyzes the condensation of carbamoyl phosphate and aspartate to form carbamoyl aspartate and inorganic phosphate, the committed step in the de novo pyrimidine nucleotide biosynthesis pathway. In Campylobacter hominis (strain ATCC BAA-381 / DSM 21671 / CCUG 45161 / LMG 19568 / NCTC 13146 / CH001A), this protein is Aspartate carbamoyltransferase catalytic subunit.